The primary structure comprises 284 residues: BES1/BZR1 homolog protein 3 (284 aa).

Disordered stretches follow at residues methionine 1–arginine 21 and glycine 85–threonine 116. The segment at arginine 6–serine 88 is required for DNA-binding. Residues glycine 85 to histidine 97 show a composition bias toward polar residues. Residues serine 98–serine 114 show a composition bias toward low complexity. Threonine 153 carries the phosphothreonine modification.

The protein belongs to the BZR/LAT61 family. Phosphorylated. Phosphorylation increases protein degradation.

The sequence is that of BES1/BZR1 homolog protein 3 (BEH3) from Arabidopsis thaliana (Mouse-ear cress).